Here is a 35-residue protein sequence, read N- to C-terminus: Apolipophorin-3 (35 aa).

Equilibrium between a soluble monomer and a bound lipoprotein form. Apolipophorin-3 associates with lipophorin during lipid loading until each particle contains 9 or 14 molecules of apolipophorin-3. In terms of tissue distribution, hemolymph.

The protein resides in the secreted. In terms of biological role, assists in the loading of diacylglycerol, generated from triacylglycerol stores in the fat body through the action of adipokinetic hormone, into lipophorin, the hemolymph lipoprotein. It increases the lipid carrying capacity of lipophorin by covering the expanding hydrophobic surface resulting from diacylglycerol uptake. It thus plays a critical role in the transport of lipids during flight in several species of insects. Has hemagglutinating activity towards rabbit erythrocytes. This chain is Apolipophorin-3, found in Heliothis virescens (Tobacco budworm moth).